A 1005-amino-acid polypeptide reads, in one-letter code: MSVPVVYDKRRNLDCREEKEESNLAFVSQDEQDSSSFTILYEEPLQEEDRYTSAELRGSQSLLFPDTSSMPGLACERSESRTDLVHHFEKEGKLGEAFDGDNSEMFLSVEAKRYKIYPLALSPIYEDDSSQEDVLSSEVSPGHHGSSKSRESANQPSSVLSLLQSVSERLQRNFDGDDRQEAEEEEEEAVASGKDWRTEKREHVTFHLPDPSIPFYPEDNQEHAGIFKSYVEFSEPTTSSLQHGRWSEKELFLQKSDMTSKLHSSLKSAYHQYLQTSRTHSSETGTRFGGTLQEPVSKYFRVQDHAGRLSPYVENVDKQTLKCNPRPGKMIIYDLHGSKYKQEVYCNIPDATTWSFPNGALIKVVRGCWILYEKPHFQGQKCVLEEGERVLDRDWLLQNRKHPERNFVLGSIKRVLKDCSIPVIELCPKTDPGCSPIYIHRSVPNVEELNIPKSTSVTVKSGVWLAYPDIHFKGQATILEEDQGLFEISAAEMKSLHPLQMGGLKVEMPMNLKVILYEKPHFLGHTKEFSEHIDSVPTFLKSDKDFHGIGSIRVIGGVWVAYEKEHFKGQQFLLEEGDFEDSSACGALSGPIMSFRYLQANFIESSITLFESSHLESGKFIDITNQEISDLEEIGFGSETRSIHVKSGVWVAYHQKFFCGDQYILEKGKYKCFFDWGGSSNTILSIRPIQLEPLGINEPTHLLKAFSKAGFQGECIDFVKECADLTSFTPASFKVLRGCWLLLYYQEDGFYHQCVLEEGLYVDLTSCGCPSARIRALQPIDYVFEEPSISLFALEHCEGRELHLEDAVNSVLNKDLHFYTQSVWIKSGLWIAYEGSNFLGRQILLTPKEIPNWTAFSGWKTIGSVRPMKQPAVYIRIRNRAQDEYLTVTGNPADARTMSVCISPYSGKDTQIWHYCRGLFKSKASHTCLDVIGGRDTPGAKVALWTEHGQLRQKWRMSRNGTISSYLSDELVLDVKGGNYYDKTHVIVNQPLEGEETQKWDIEIL.

Phosphoserine is present on residues Ser122, Ser129, Ser130, Ser136, and Ser140. Disordered regions lie at residues 132–159 (EDVL…PSSV) and 173–198 (NFDG…DWRT). The span at 180–189 (QEAEEEEEEA) shows a compositional bias: acidic residues. 9 Beta/gamma crystallin 'Greek key' domains span residues 367–416 (GCWI…KRVL), 462–500 (GVWL…HPLQ), 512–556 (LKVI…RVIG), 557–599 (GVWV…RYLQ), 605–647 (SSIT…HVKS), 648–690 (GVWV…RPIQ), 701–737 (HLLK…KVLR), 738–781 (GCWL…QPID), and 828–869 (GLWI…RPMK). The region spanning 871-1003 (PAVYIRIRNR…GEETQKWDIE (133 aa)) is the Ricin B-type lectin domain.

The protein belongs to the beta/gamma-crystallin family.

The polypeptide is Beta/gamma crystallin domain-containing protein 3 (Crybg3) (Mus musculus (Mouse)).